A 415-amino-acid polypeptide reads, in one-letter code: Multidrug resistance protein MdtA (415 aa).

The first 21 residues, Met-1–Ala-21, serve as a signal peptide directing secretion. The segment covering Asp-31 to Pro-47 has biased composition (polar residues). Disordered stretches follow at residues Asp-31–Ala-60 and Glu-392–Ser-415. Residues Pro-399–Ser-415 are compositionally biased toward basic and acidic residues.

The protein belongs to the membrane fusion protein (MFP) (TC 8.A.1) family. Part of a tripartite efflux system composed of MdtA, MdtB and MdtC.

It is found in the cell inner membrane. Functionally, the MdtABC tripartite complex confers resistance against novobiocin and deoxycholate. This is Multidrug resistance protein MdtA from Escherichia coli O8 (strain IAI1).